The following is a 416-amino-acid chain: Gamma-glutamyl phosphate reductase (416 aa).

This sequence belongs to the gamma-glutamyl phosphate reductase family.

It is found in the cytoplasm. The enzyme catalyses L-glutamate 5-semialdehyde + phosphate + NADP(+) = L-glutamyl 5-phosphate + NADPH + H(+). The protein operates within amino-acid biosynthesis; L-proline biosynthesis; L-glutamate 5-semialdehyde from L-glutamate: step 2/2. In terms of biological role, catalyzes the NADPH-dependent reduction of L-glutamate 5-phosphate into L-glutamate 5-semialdehyde and phosphate. The product spontaneously undergoes cyclization to form 1-pyrroline-5-carboxylate. The sequence is that of Gamma-glutamyl phosphate reductase from Streptococcus pyogenes serotype M4 (strain MGAS10750).